A 181-amino-acid chain; its full sequence is Crossover junction endodeoxyribonuclease RuvC (181 aa).

Active-site residues include Asp-7, Glu-67, and Asp-139. The Mg(2+) site is built by Asp-7, Glu-67, and Asp-139.

The protein belongs to the RuvC family. In terms of assembly, homodimer which binds Holliday junction (HJ) DNA. The HJ becomes 2-fold symmetrical on binding to RuvC with unstacked arms; it has a different conformation from HJ DNA in complex with RuvA. In the full resolvosome a probable DNA-RuvA(4)-RuvB(12)-RuvC(2) complex forms which resolves the HJ. The cofactor is Mg(2+).

It localises to the cytoplasm. It catalyses the reaction Endonucleolytic cleavage at a junction such as a reciprocal single-stranded crossover between two homologous DNA duplexes (Holliday junction).. The RuvA-RuvB-RuvC complex processes Holliday junction (HJ) DNA during genetic recombination and DNA repair. Endonuclease that resolves HJ intermediates. Cleaves cruciform DNA by making single-stranded nicks across the HJ at symmetrical positions within the homologous arms, yielding a 5'-phosphate and a 3'-hydroxyl group; requires a central core of homology in the junction. The consensus cleavage sequence is 5'-(A/T)TT(C/G)-3'. Cleavage occurs on the 3'-side of the TT dinucleotide at the point of strand exchange. HJ branch migration catalyzed by RuvA-RuvB allows RuvC to scan DNA until it finds its consensus sequence, where it cleaves and resolves the cruciform DNA. The polypeptide is Crossover junction endodeoxyribonuclease RuvC (Cupriavidus taiwanensis (strain DSM 17343 / BCRC 17206 / CCUG 44338 / CIP 107171 / LMG 19424 / R1) (Ralstonia taiwanensis (strain LMG 19424))).